Reading from the N-terminus, the 316-residue chain is Arginase-1 (316 aa).

The tract at residues 1–26 (MAKERHSVGVIGAPFSKGQPRRGVEE) is disordered. Mn(2+)-binding residues include H101, D124, H126, and D128. Substrate contacts are provided by residues 126–130 (HADIN), 137–139 (CGN), and D183. D232 and D234 together coordinate Mn(2+). T246 is a substrate binding site.

Belongs to the arginase family. In terms of assembly, homotrimer. Mn(2+) is required as a cofactor. Strongest expression in liver.

The enzyme catalyses L-arginine + H2O = urea + L-ornithine. The protein operates within nitrogen metabolism; urea cycle; L-ornithine and urea from L-arginine: step 1/1. The polypeptide is Arginase-1 (arg1) (Xenopus laevis (African clawed frog)).